A 267-amino-acid polypeptide reads, in one-letter code: Glutamate 5-kinase (267 aa).

Lysine 14 lines the ATP pocket. Residues serine 54, aspartate 141, and asparagine 157 each contribute to the substrate site. ATP contacts are provided by residues 177–178 and 219–225; these read SD and TGGMMSK.

It belongs to the glutamate 5-kinase family.

It localises to the cytoplasm. It carries out the reaction L-glutamate + ATP = L-glutamyl 5-phosphate + ADP. Its pathway is amino-acid biosynthesis; L-proline biosynthesis; L-glutamate 5-semialdehyde from L-glutamate: step 1/2. Catalyzes the transfer of a phosphate group to glutamate to form L-glutamate 5-phosphate. This is Glutamate 5-kinase from Streptococcus thermophilus.